We begin with the raw amino-acid sequence, 200 residues long: DNA dC-&gt;dU-editing enzyme APOBEC-3H (200 aa).

One can recognise a CMP/dCMP-type deaminase domain in the interval 4–126; that stretch reads LTAETFRLQF…KPQQKGLRLL (123 aa). His-54 serves as a coordination point for Zn(2+). The Proton donor role is filled by Glu-56. Positions 85 and 88 each coordinate Zn(2+). The stretch at 160-182 forms a coiled coil; the sequence is YKMLEELDKNSRAIKRRLERIKI.

The protein belongs to the cytidine and deoxycytidylate deaminase family. In terms of assembly, homodimer. Interacts with AGO1, AGO2 and AGO3. The cofactor is Zn(2+). Post-translationally, (Microbial infection) Following infection by some HIV-1 strains, such as isolate BRU/LAI, can be ubiquitinated by a cullin-5-RING E3 ubiquitin-protein ligase complex (ECS complex) hijacked by the HIV-1 Vif protein, leading to its degradation. Ubiquitination by the ECS complex is however less efficent compared to APOBEC3G or APOBEC3G. Expressed in lymphoid organs. Also detected in non-lymphoid tissues including lung, testis, ovary, fetal liver and skin.

Its subcellular location is the cytoplasm. It localises to the nucleus. The protein resides in the P-body. The catalysed reaction is a 2'-deoxycytidine in single-stranded DNA + H2O + H(+) = a 2'-deoxyuridine in single-stranded DNA + NH4(+). APOBEC3H activity is regulated by RNA. While RNA-binding inhibits the DNA deaminase activity, double-stranded RNA is required for HIV-1 restriction by promoting APOBEC3H homodimerization and packaging into retroviral nucleocapsids. Its activity is regulated as follows. (Microbial infection) Antiviral activity is inhibited to some extent by the HIV-1 virion infectivity factor (VIF), that prevents its incorporation into progeny virions by both inhibiting its translation and/or by inducing its ubiquitination and subsequent degradation by the 26S proteasome. DNA deaminase (cytidine deaminase) which acts as an inhibitor of retrovirus replication and retrotransposon mobility via deaminase-dependent and -independent mechanisms. The A3H-var/haplotype 2 exhibits antiviral activity against vif-deficient HIV-1. After the penetration of retroviral nucleocapsids into target cells of infection and the initiation of reverse transcription, it can induce the conversion of cytosine to uracil in the minus-sense single-strand viral DNA, leading to G-to-A hypermutations in the subsequent plus-strand viral DNA. The resultant detrimental levels of mutations in the proviral genome, along with a deamination-independent mechanism that works prior to the proviral integration, together exert efficient antiretroviral effects in infected target cells. Selectively targets single-stranded DNA and does not deaminate double-stranded DNA or single- or double-stranded RNA. Exhibits antiviral activity also against T-cell leukemia virus type 1 (HTLV-1) and may inhibit the mobility of LTR and non-LTR retrotransposons. The sequence is that of DNA dC-&gt;dU-editing enzyme APOBEC-3H from Homo sapiens (Human).